A 423-amino-acid chain; its full sequence is MTGPDNSLTDPSASPSTPVASLRPTAEQLLPQQRDQLHAFIERVLADHPDHIVDCCVEYYTNTLPNGTAAYGDLLALLAATSADADAFTAAVTAIQSPLLSGDGPTDGPPAQESVTAHARVVAEDMSALRGRVAADDATATGSEATADEAAAVAELIERAREMNQNMEEIDRLAAQQSDNTDNLKAEISDISSAIEQIAASATEVNDRSDEAQSLATDGYERAVAVVEQVEAIHDGVTEVRHQTATLQDHTEAIDDIVEVINDIADQTNLLALNASIEAARADAGGEGFAVVADEVKSLAEESKTQAEEIEERVENIQVETRNAADTLVELETETEDSLEASTSSLDTFEEIKDLVTGVSTSLDEIKSGTERQTESSEELTMMIDEAARKADTISDEVASMADANHAQLQKLEAYQSESDQSR.

Polar residues predominate over residues 1–19 (MTGPDNSLTDPSASPSTPV). The disordered stretch occupies residues 1–21 (MTGPDNSLTDPSASPSTPVAS). Positions 152–388 (AVAELIERAR…ELTMMIDEAA (237 aa)) constitute a Methyl-accepting transducer domain.

The protein belongs to the methyl-accepting chemotaxis (MCP) protein family. Methylated by CheR.

It localises to the cytoplasm. In terms of biological role, potentially involved in chemo- or phototactic signal transduction. The chain is Transducer protein Htr13 (htr13) from Halobacterium salinarum (strain ATCC 29341 / DSM 671 / R1).